Here is a 371-residue protein sequence, read N- to C-terminus: GDP-mannose 3,5-epimerase 2 (371 aa).

NAD(+) contacts are provided by residues 29 to 55 (GAGGFIASHIARRLKSEGHYIIASDWK), Asp-53, and Asp-73. Substrate-binding positions include Gly-98 and 138–140 (SAC). NAD(+)-binding residues include Tyr-168 and Lys-172. Tyr-168 serves as the catalytic Proton acceptor. Residues Asn-197, 210–212 (EKA), Lys-219, 235–237 (QTR), Arg-300, and Ser-350 contribute to the substrate site.

It belongs to the NAD(P)-dependent epimerase/dehydratase family. NAD(+) is required as a cofactor.

The catalysed reaction is GDP-alpha-D-mannose = GDP-beta-L-gulose. It carries out the reaction GDP-beta-L-gulose = GDP-beta-L-galactose. It participates in cofactor biosynthesis; L-ascorbate biosynthesis via GDP-alpha-D-mannose pathway; L-ascorbate from GDP-alpha-D-mannose: step 1/5. Its function is as follows. Catalyzes a reversible epimerization of GDP-D-mannose that precedes the committed step in the biosynthesis of vitamin C (L-ascorbate), resulting in the hydrolysis of the highly energetic glycosyl-pyrophosphoryl linkage. Able to catalyze 2 distinct epimerization reactions and can release both GDP-L-galactose and GDP-L-gulose from GDP-mannose. This Oryza sativa subsp. japonica (Rice) protein is GDP-mannose 3,5-epimerase 2 (GME-2).